The chain runs to 378 residues: Putative F-box only protein 15 (378 aa).

In terms of domain architecture, F-box spans 5–52; sequence KRVYRSLPFELVEEILKKTPAESLNRFKSTCKQWYGIITSKRFMYNHL.

The chain is Putative F-box only protein 15 (FBX15) from Arabidopsis thaliana (Mouse-ear cress).